The sequence spans 337 residues: Heme A synthase (337 aa).

Transmembrane regions (helical) follow at residues 3 to 23 (LARWLWVVAGLVVTIVAIGGI), 94 to 114 (VIGLAFLLPMMWFWIRGMIPA), 120 to 140 (LLALFALICGQGALGWYMVAS), 154 to 174 (LSAHLLTALFLLAGLVWTALD), 191 to 211 (GVAWMASIILFIQILLGAWVA), 248 to 268 (FLLHFLHRWWAWVAVIALVVL), and 289 to 309 (TMVVLGIATVLSEVSLWIAVA). H254 contacts heme. H310 is a binding site for heme. The helical transmembrane segment at 311–331 (QLTGALLVISTAWAAHAIGTA) threads the bilayer.

The protein belongs to the COX15/CtaA family. Type 2 subfamily. In terms of assembly, interacts with CtaB. Requires heme b as cofactor.

The protein resides in the cell membrane. It carries out the reaction Fe(II)-heme o + 2 A + H2O = Fe(II)-heme a + 2 AH2. The protein operates within porphyrin-containing compound metabolism; heme A biosynthesis; heme A from heme O: step 1/1. Catalyzes the conversion of heme O to heme A by two successive hydroxylations of the methyl group at C8. The first hydroxylation forms heme I, the second hydroxylation results in an unstable dihydroxymethyl group, which spontaneously dehydrates, resulting in the formyl group of heme A. The chain is Heme A synthase from Erythrobacter litoralis (strain HTCC2594).